An 876-amino-acid polypeptide reads, in one-letter code: Monofunctional isopimaradiene synthase, chloroplastic (876 aa).

The N-terminal 64 residues, 1–64 (MAMPSYSSLS…YLRLGSRKII (64 aa)), are a transit peptide targeting the chloroplast. Mg(2+) contacts are provided by D628, D632, N772, T776, and E780. The DDXXD motif motif lies at 628–632 (DDLYD).

This sequence belongs to the terpene synthase family. Tpsd subfamily. Requires Mg(2+) as cofactor.

It is found in the plastid. The protein localises to the chloroplast. It carries out the reaction (+)-copalyl diphosphate = isopimara-7,15-diene + diphosphate. Its pathway is terpene metabolism; oleoresin biosynthesis. Its function is as follows. Involved in defensive oleoresin formation in conifers in response to insect attack or other injury. Involved in diterpene (C20) olefins biosynthesis. Monofunctional enzyme lacking the DXDD motif in the class II active site relevant for the cyclization of geranylgeranyl diphosphate (GGPP). Requires (+)-copalyl diphosphate ((+)-CPP) as substrate, but no activity with GGPP or ent-CPP. Isopimaradiene is the major products of the enzyme followed by sandaracopimaradiene. The protein is Monofunctional isopimaradiene synthase, chloroplastic of Pinus banksiana (Jack pine).